Consider the following 454-residue polypeptide: Bifunctional protein GlmU (454 aa).

The tract at residues 1-225 is pyrophosphorylase; sequence MNIVILAAGM…LWETLGVNSK (225 aa). Residues 6-9, Lys20, Gln71, 76-77, 98-100, Gly135, Glu150, Asn165, and Asn223 each bind UDP-N-acetyl-alpha-D-glucosamine; these read LAAG, GT, and YGD. Position 100 (Asp100) interacts with Mg(2+). Position 223 (Asn223) interacts with Mg(2+). A linker region spans residues 226-246; that stretch reads VQLAEVERIHQRNLAQRLLET. Residues 247-454 are N-acetyltransferase; it reads GVTLADPARI…WQRPVKKAKQ (208 aa). Residues Arg329 and Lys347 each contribute to the UDP-N-acetyl-alpha-D-glucosamine site. The active-site Proton acceptor is the His359. Positions 362 and 373 each coordinate UDP-N-acetyl-alpha-D-glucosamine. Acetyl-CoA contacts are provided by residues Ala376, 382 to 383, Ser401, Ala419, and Arg436; that span reads NY.

It in the N-terminal section; belongs to the N-acetylglucosamine-1-phosphate uridyltransferase family. In the C-terminal section; belongs to the transferase hexapeptide repeat family. Homotrimer. Mg(2+) serves as cofactor.

The protein resides in the cytoplasm. It carries out the reaction alpha-D-glucosamine 1-phosphate + acetyl-CoA = N-acetyl-alpha-D-glucosamine 1-phosphate + CoA + H(+). It catalyses the reaction N-acetyl-alpha-D-glucosamine 1-phosphate + UTP + H(+) = UDP-N-acetyl-alpha-D-glucosamine + diphosphate. It functions in the pathway nucleotide-sugar biosynthesis; UDP-N-acetyl-alpha-D-glucosamine biosynthesis; N-acetyl-alpha-D-glucosamine 1-phosphate from alpha-D-glucosamine 6-phosphate (route II): step 2/2. The protein operates within nucleotide-sugar biosynthesis; UDP-N-acetyl-alpha-D-glucosamine biosynthesis; UDP-N-acetyl-alpha-D-glucosamine from N-acetyl-alpha-D-glucosamine 1-phosphate: step 1/1. Its pathway is bacterial outer membrane biogenesis; LPS lipid A biosynthesis. Catalyzes the last two sequential reactions in the de novo biosynthetic pathway for UDP-N-acetylglucosamine (UDP-GlcNAc). The C-terminal domain catalyzes the transfer of acetyl group from acetyl coenzyme A to glucosamine-1-phosphate (GlcN-1-P) to produce N-acetylglucosamine-1-phosphate (GlcNAc-1-P), which is converted into UDP-GlcNAc by the transfer of uridine 5-monophosphate (from uridine 5-triphosphate), a reaction catalyzed by the N-terminal domain. The protein is Bifunctional protein GlmU of Cupriavidus pinatubonensis (strain JMP 134 / LMG 1197) (Cupriavidus necator (strain JMP 134)).